The following is a 124-amino-acid chain: 5-hydroxyisourate hydrolase (124 aa).

Residues His-15, Arg-53, and Tyr-121 each coordinate substrate.

It belongs to the transthyretin family. 5-hydroxyisourate hydrolase subfamily. As to quaternary structure, homotetramer.

It carries out the reaction 5-hydroxyisourate + H2O = 5-hydroxy-2-oxo-4-ureido-2,5-dihydro-1H-imidazole-5-carboxylate + H(+). Catalyzes the hydrolysis of 5-hydroxyisourate (HIU) to 2-oxo-4-hydroxy-4-carboxy-5-ureidoimidazoline (OHCU). This is 5-hydroxyisourate hydrolase from Mesorhizobium japonicum (strain LMG 29417 / CECT 9101 / MAFF 303099) (Mesorhizobium loti (strain MAFF 303099)).